The chain runs to 1164 residues: Shugoshin 2A (1164 aa).

The stretch at 62 to 113 (LSKEKENSRRITTEKMQLQKEVEKLNFENTFLRLKLNTLNKKLVEIESHVSN) forms a coiled coil. Disordered regions lie at residues 160–269 (SEND…VTMR), 287–314 (HQPTSSPGSNWNNEIHGHTNETSNNTQR), 390–492 (RKVK…PFSR), 521–541 (TFVIRKSEKDNLFPNQEDKDT), and 917–992 (PLDS…ETHG). Over residues 182 to 198 (SKTSPDSTSSVSRQPSS) the composition is skewed to low complexity. Composition is skewed to polar residues over residues 238-247 (DQSPKSSLSE) and 288-299 (QPTSSPGSNWNN). Positions 390-412 (RKVKGASSDKKRESSKRECKDGS) are enriched in basic and acidic residues. The segment covering 443-472 (CISSTEQPSQVNTQKKRTLQNSSDQENIQN) has biased composition (polar residues). The span at 525-541 (RKSEKDNLFPNQEDKDT) shows a compositional bias: basic and acidic residues. The segment covering 934–948 (GEQTNLPKMQKQSAG) has biased composition (polar residues). At Ser1042 the chain carries Phosphoserine. The disordered stretch occupies residues 1092 to 1164 (ITTGTRNPHH…EPSLRSKMRR (73 aa)). The span at 1112–1125 (TSLVLVDTSSVSDT) shows a compositional bias: low complexity. The span at 1126 to 1140 (NPANPENESEGQSSH) shows a compositional bias: polar residues.

This sequence belongs to the shugoshin family. As to quaternary structure, part of an astrin (SPAG5)-kinastrin (SKAP) complex containing KNSTRN, SPAG5, PLK1, DYNLL1 and SGO2A. Interacts with CDCA8. Interacts with PPP2CA. Ubiquitously expressed in proliferating cells. Highly expressed in the testis and oocytes.

It is found in the nucleus. The protein localises to the chromosome. Its subcellular location is the centromere. The protein resides in the kinetochore. Its function is as follows. Cooperates with PPP2CA to protect centromeric cohesin from separase-mediated cleavage in oocytes specifically during meiosis I. Has a crucial role in protecting REC8 at centromeres from cleavage by separase. During meiosis, protects centromeric cohesion complexes until metaphase II/anaphase II transition, preventing premature release of meiosis-specific REC8 cohesin complexes from anaphase I centromeres. Is thus essential for an accurate gametogenesis. May act by targeting PPP2CA to centromeres, thus leading to cohesin dephosphorylation. Essential for recruiting KIF2C to the inner centromere and for correcting defective kinetochore attachments. Involved in centromeric enrichment of AUKRB in prometaphase. This chain is Shugoshin 2A, found in Mus musculus (Mouse).